The sequence spans 75 residues: Small ribosomal subunit protein bS18 (75 aa).

It belongs to the bacterial ribosomal protein bS18 family. In terms of assembly, part of the 30S ribosomal subunit. Forms a tight heterodimer with protein bS6.

Functionally, binds as a heterodimer with protein bS6 to the central domain of the 16S rRNA, where it helps stabilize the platform of the 30S subunit. The polypeptide is Small ribosomal subunit protein bS18 (Hydrogenovibrio crunogenus (strain DSM 25203 / XCL-2) (Thiomicrospira crunogena)).